A 433-amino-acid chain; its full sequence is O-methyltransferase aclM (433 aa).

A coiled-coil region spans residues 5–37 (LTDAERTALQTSLEALNRQVEATRNILRSNSQK). S-adenosyl-L-methionine contacts are provided by residues Asp-277 and 311–313 (GDF). His-330 serves as the catalytic Proton acceptor.

This sequence belongs to the class I-like SAM-binding methyltransferase superfamily. Cation-independent O-methyltransferase family. COMT subfamily.

Its pathway is mycotoxin biosynthesis. Functionally, O-methyltransferase; part of the gene cluster that mediates the biosynthesis of aspirochlorine (or antibiotic A30641), an unusual halogenated spiro compound with distinctive antifungal properties due to selective inhibition of protein biosynthesis, and which is also active against bacteria, viruses, and murine tumor cells. The non-ribosomal peptide synthetase (NRPS) aclP is responsible the formation of the diketopiperazine (DKP) core from the condensation of 2 phenylalanine residues. One Phe residue is tailored into chlorotyrosine by hydroxylation and chlorination, whereas the second Phe undergoes an unprecedented C-C bond cleavage to be converted into glycine. After formation of the DKP, sulfur is incorporated into the DKP by conjugation with glutathione by aclG, followed by its stepwise degradation to the thiol by aclI, aclJ and aclK, and the dithiol oxidation by aclT. In addition, oxygenases (aclB, aclC, aclL and aclO) and O-methyltransferases (aclM and aclU) act as tailoring enzymes to produce the intermediate dechloroaspirochlorine. Ultimately, chlorination of dechloroaspirochlorine by the halogenase aclH is the last step in the aspirochlorine pathway. This chain is O-methyltransferase aclM, found in Aspergillus oryzae (strain ATCC 42149 / RIB 40) (Yellow koji mold).